The primary structure comprises 474 residues: Synaptotagmin-17 (474 aa).

A disordered region spans residues 54-112 (PAQTPPWLVSNRSEDKEGDSDNTTSEPPATPQDTSPDRRRSSSDTSRSTYSLTRRISSL). Over residues 96-112 (SDTSRSTYSLTRRISSL) the composition is skewed to low complexity. C2 domains follow at residues 184–310 (QLGM…HWWK) and 321–455 (ELGE…EQWH).

The protein belongs to the synaptotagmin family.

Its subcellular location is the membrane. Its function is as follows. May play a role in dendrite formation by melanocytes. In Xenopus tropicalis (Western clawed frog), this protein is Synaptotagmin-17 (syt17).